A 489-amino-acid polypeptide reads, in one-letter code: uncharacterized protein (489 aa).

The next 11 helical transmembrane spans lie at 29–49 (FIASCILFCCPGIYLAVTGLG), 67–87 (LLYALFTVCGWAGGPILKYLG), 90–110 (WALALGATGYPIYIGGLWYFD), 119–139 (IFTGAYEGIAAGLLWASTAYI), 152–172 (FIATQWTILAFGSTVGSFIAF), 186–206 (AVYIIFIIIMACAVLLAILFI), 276–296 (LNNVLFWVIQFFVPYLFTLIL), 308–328 (IIGLTIQAVVIMATLSGELGW), 351–371 (GGALVLYLLMGIQYGSSIVSV), 397–417 (AAGMCVSFGIDAAGVSFLGQG), and 418–438 (IIYFIFLFVMCASQLIMTSIF).

The protein resides in the membrane. This is an uncharacterized protein from Schizosaccharomyces pombe (strain 972 / ATCC 24843) (Fission yeast).